Here is a 231-residue protein sequence, read N- to C-terminus: Uracil-DNA glycosylase (231 aa).

Aspartate 74 acts as the Proton acceptor in catalysis.

It belongs to the uracil-DNA glycosylase (UDG) superfamily. UNG family.

The protein localises to the cytoplasm. The catalysed reaction is Hydrolyzes single-stranded DNA or mismatched double-stranded DNA and polynucleotides, releasing free uracil.. In terms of biological role, excises uracil residues from the DNA which can arise as a result of misincorporation of dUMP residues by DNA polymerase or due to deamination of cytosine. This chain is Uracil-DNA glycosylase, found in Campylobacter jejuni subsp. jejuni serotype O:6 (strain 81116 / NCTC 11828).